The primary structure comprises 458 residues: Phosphoglucosamine mutase (458 aa).

S102 (phosphoserine intermediate) is an active-site residue. Positions 102, 252, 254, and 256 each coordinate Mg(2+). Phosphoserine is present on S102.

This sequence belongs to the phosphohexose mutase family. It depends on Mg(2+) as a cofactor. Activated by phosphorylation.

The enzyme catalyses alpha-D-glucosamine 1-phosphate = D-glucosamine 6-phosphate. Functionally, catalyzes the conversion of glucosamine-6-phosphate to glucosamine-1-phosphate. The protein is Phosphoglucosamine mutase of Anaeromyxobacter dehalogenans (strain 2CP-C).